A 238-amino-acid chain; its full sequence is Tyrosine recombinase XerD-like (238 aa).

One can recognise a Core-binding (CB) domain in the interval methionine 1 to tyrosine 75. Residues valine 90–arginine 238 enclose the Tyr recombinase domain. Active-site residues include lysine 154 and arginine 204. Residue tyrosine 236 is the O-(3'-phospho-DNA)-tyrosine intermediate of the active site.

It belongs to the 'phage' integrase family. XerD-like subfamily.

It is found in the cytoplasm. Its function is as follows. Putative tyrosine recombinase. Not involved in the cutting and rejoining of the recombining DNA molecules on dif(SL) site. This Lactococcus lactis subsp. lactis (strain IL1403) (Streptococcus lactis) protein is Tyrosine recombinase XerD-like (ynbA).